The primary structure comprises 554 residues: 3-(3-hydroxy-phenyl)propionate/3-hydroxycinnamic acid hydroxylase (554 aa).

Residues 17–46 and 285–295 each bind FAD; these read QVAI…VVEK and FRIDRVLLAGD.

This sequence belongs to the PheA/TfdB FAD monooxygenase family. Requires FAD as cofactor.

The catalysed reaction is 3-(3-hydroxyphenyl)propanoate + NADH + O2 + H(+) = 3-(2,3-dihydroxyphenyl)propanoate + NAD(+) + H2O. The enzyme catalyses (2E)-3-(3-hydroxyphenyl)prop-2-enoate + NADH + O2 + H(+) = (2E)-3-(2,3-dihydroxyphenyl)prop-2-enoate + NAD(+) + H2O. Its pathway is aromatic compound metabolism; 3-phenylpropanoate degradation. Functionally, catalyzes the insertion of one atom of molecular oxygen into position 2 of the phenyl ring of 3-(3-hydroxyphenyl)propionate (3-HPP) and hydroxycinnamic acid (3HCI). The sequence is that of 3-(3-hydroxy-phenyl)propionate/3-hydroxycinnamic acid hydroxylase from Escherichia coli (strain 55989 / EAEC).